Reading from the N-terminus, the 204-residue chain is Holliday junction branch migration complex subunit RuvA (204 aa).

Residues 1–67 (MIDYLYGTLD…GGVISLYGFF (67 aa)) form a domain I region. The interval 68 to 149 (TIEEREMYLL…TVNVLNKEKQ (82 aa)) is domain II. Residues 150 to 154 (TGAET) are flexible linker. Residues 155–204 (IKNTMVSEAIAGLITLGYKMQQARVAVTNVYEHNENITLEDLIKKSLQYL) are domain III.

This sequence belongs to the RuvA family. In terms of assembly, homotetramer. Forms an RuvA(8)-RuvB(12)-Holliday junction (HJ) complex. HJ DNA is sandwiched between 2 RuvA tetramers; dsDNA enters through RuvA and exits via RuvB. An RuvB hexamer assembles on each DNA strand where it exits the tetramer. Each RuvB hexamer is contacted by two RuvA subunits (via domain III) on 2 adjacent RuvB subunits; this complex drives branch migration. In the full resolvosome a probable DNA-RuvA(4)-RuvB(12)-RuvC(2) complex forms which resolves the HJ.

The protein localises to the cytoplasm. The RuvA-RuvB-RuvC complex processes Holliday junction (HJ) DNA during genetic recombination and DNA repair, while the RuvA-RuvB complex plays an important role in the rescue of blocked DNA replication forks via replication fork reversal (RFR). RuvA specifically binds to HJ cruciform DNA, conferring on it an open structure. The RuvB hexamer acts as an ATP-dependent pump, pulling dsDNA into and through the RuvAB complex. HJ branch migration allows RuvC to scan DNA until it finds its consensus sequence, where it cleaves and resolves the cruciform DNA. This is Holliday junction branch migration complex subunit RuvA from Endomicrobium trichonymphae.